A 523-amino-acid chain; its full sequence is Sensory neuron membrane protein 1 (523 aa).

Over methionine 1–alanine 10 the chain is Cytoplasmic. A helical membrane pass occupies residues valine 11 to isoleucine 31. The Extracellular portion of the chain corresponds to leucine 32–valine 458. 2 N-linked (GlcNAc...) asparagine glycosylation sites follow: asparagine 67 and asparagine 229. 3 disulfides stabilise this stretch: cysteine 268–cysteine 333, cysteine 297–cysteine 352, and cysteine 335–cysteine 341. An N-linked (GlcNAc...) asparagine glycan is attached at asparagine 440. A helical membrane pass occupies residues serine 459–phenylalanine 479. The Cytoplasmic segment spans residues histidine 480 to methionine 523. Residues valine 499–methionine 523 form a disordered region.

It belongs to the CD36 family. As to expression, localizes to both male and female antennae but not the leg, wing, gut, head, or thoracic ganglia. Detected throughout the sensory epithelium, associating with both sex-pheromone sensilla and plant-volatile sensilla. Differentially expressed both among different sensilla and different neurons within a given sensillum. Expression coincides with that of several other olfactory-specific proteins that are involved in odor detection.

Its subcellular location is the cell membrane. Functionally, plays an olfactory role that is not restricted to pheromone sensitivity. The sequence is that of Sensory neuron membrane protein 1 from Manduca sexta (Tobacco hawkmoth).